The sequence spans 167 residues: Thioredoxin-like protein HI_1115 (167 aa).

A helical membrane pass occupies residues 10–27; sequence GLSLFLTFIVITSILDFV. In terms of domain architecture, Thioredoxin spans 30–167; it reads PVVPEEINKI…VRLFFAEFFG (138 aa). Residues cysteine 69 and cysteine 72 are joined by a disulfide bond.

It belongs to the thioredoxin family.

It is found in the cell membrane. In Haemophilus influenzae (strain ATCC 51907 / DSM 11121 / KW20 / Rd), this protein is Thioredoxin-like protein HI_1115.